Here is a 264-residue protein sequence, read N- to C-terminus: Protein Saci_1508 (264 aa).

The protein belongs to the CinA family.

The chain is Protein Saci_1508 from Sulfolobus acidocaldarius (strain ATCC 33909 / DSM 639 / JCM 8929 / NBRC 15157 / NCIMB 11770).